Reading from the N-terminus, the 334-residue chain is Anthranilate phosphoribosyltransferase (334 aa).

5-phospho-alpha-D-ribose 1-diphosphate-binding positions include G79, 82-83 (GD), S87, 89-92 (NIST), 107-115 (KHGNRSISS), and S119. Anthranilate is bound at residue G79. S91 is a binding site for Mg(2+). An anthranilate-binding site is contributed by N110. R165 lines the anthranilate pocket. The Mg(2+) site is built by D224 and E225.

The protein belongs to the anthranilate phosphoribosyltransferase family. Homodimer. Mg(2+) is required as a cofactor.

The catalysed reaction is N-(5-phospho-beta-D-ribosyl)anthranilate + diphosphate = 5-phospho-alpha-D-ribose 1-diphosphate + anthranilate. It functions in the pathway amino-acid biosynthesis; L-tryptophan biosynthesis; L-tryptophan from chorismate: step 2/5. Catalyzes the transfer of the phosphoribosyl group of 5-phosphorylribose-1-pyrophosphate (PRPP) to anthranilate to yield N-(5'-phosphoribosyl)-anthranilate (PRA). This is Anthranilate phosphoribosyltransferase from Streptococcus pneumoniae serotype 19F (strain G54).